Reading from the N-terminus, the 728-residue chain is Elongation factor 2 (728 aa).

The region spanning 19 to 261 (EHIRNIAIAA…MVCEHFPNPV (243 aa)) is the tr-type G domain. Residues 28 to 35 (AHVDHGKT), 94 to 98 (DTPGH), and 148 to 151 (NKVD) contribute to the GTP site. The residue at position 596 (His-596) is a Diphthamide.

This sequence belongs to the TRAFAC class translation factor GTPase superfamily. Classic translation factor GTPase family. EF-G/EF-2 subfamily.

The protein localises to the cytoplasm. Catalyzes the GTP-dependent ribosomal translocation step during translation elongation. During this step, the ribosome changes from the pre-translocational (PRE) to the post-translocational (POST) state as the newly formed A-site-bound peptidyl-tRNA and P-site-bound deacylated tRNA move to the P and E sites, respectively. Catalyzes the coordinated movement of the two tRNA molecules, the mRNA and conformational changes in the ribosome. The protein is Elongation factor 2 of Haloarcula marismortui (strain ATCC 43049 / DSM 3752 / JCM 8966 / VKM B-1809) (Halobacterium marismortui).